Consider the following 289-residue polypeptide: Protease HtpX (289 aa).

The next 2 helical transmembrane spans lie at isoleucine 6–isoleucine 26 and threonine 38–methionine 58. Residue histidine 144 coordinates Zn(2+). Residue glutamate 145 is part of the active site. Histidine 148 is a binding site for Zn(2+). A run of 2 helical transmembrane segments spans residues glycine 152 to serine 172 and leucine 194 to isoleucine 214. Glutamate 223 provides a ligand contact to Zn(2+).

The protein belongs to the peptidase M48B family. Zn(2+) is required as a cofactor.

The protein resides in the cell inner membrane. The chain is Protease HtpX from Haemophilus ducreyi (strain 35000HP / ATCC 700724).